The sequence spans 258 residues: uncharacterized protein (258 aa).

Residues 16 to 148 (EAFDSFEYAE…VLRALNFDTH (133 aa)) form the Cyclin N-terminal domain.

It belongs to the cyclin family. Cyclin L subfamily.

It localises to the cytoplasm. The protein resides in the nucleus. This is an uncharacterized protein from Schizosaccharomyces pombe (strain 972 / ATCC 24843) (Fission yeast).